The primary structure comprises 842 residues: Alanine--tRNA ligase (842 aa).

Residues His-549, His-553, Cys-650, and His-654 each coordinate Zn(2+).

This sequence belongs to the class-II aminoacyl-tRNA synthetase family. Requires Zn(2+) as cofactor.

Its subcellular location is the cytoplasm. It carries out the reaction tRNA(Ala) + L-alanine + ATP = L-alanyl-tRNA(Ala) + AMP + diphosphate. Catalyzes the attachment of alanine to tRNA(Ala) in a two-step reaction: alanine is first activated by ATP to form Ala-AMP and then transferred to the acceptor end of tRNA(Ala). Also edits incorrectly charged Ser-tRNA(Ala) and Gly-tRNA(Ala) via its editing domain. The chain is Alanine--tRNA ligase from Campylobacter jejuni subsp. jejuni serotype O:2 (strain ATCC 700819 / NCTC 11168).